The sequence spans 765 residues: 1,4-alpha-glucan branching enzyme GlgB (765 aa).

The active-site Nucleophile is the D431. Residue E484 is the Proton donor of the active site.

The protein belongs to the glycosyl hydrolase 13 family. GlgB subfamily. As to quaternary structure, monomer.

The catalysed reaction is Transfers a segment of a (1-&gt;4)-alpha-D-glucan chain to a primary hydroxy group in a similar glucan chain.. It participates in glycan biosynthesis; glycogen biosynthesis. In terms of biological role, catalyzes the formation of the alpha-1,6-glucosidic linkages in glycogen by scission of a 1,4-alpha-linked oligosaccharide from growing alpha-1,4-glucan chains and the subsequent attachment of the oligosaccharide to the alpha-1,6 position. In Synechococcus sp. (strain CC9311), this protein is 1,4-alpha-glucan branching enzyme GlgB.